Consider the following 196-residue polypeptide: dITP/XTP pyrophosphatase (196 aa).

A substrate-binding site is contributed by 7–12; sequence THNPGK. Positions 40 and 69 each coordinate Mg(2+). Catalysis depends on Asp-69, which acts as the Proton acceptor. Residues Ser-70, 150–153, Lys-173, and 178–179 each bind substrate; these read FGYD and HR.

Belongs to the HAM1 NTPase family. Homodimer. The cofactor is Mg(2+).

It catalyses the reaction XTP + H2O = XMP + diphosphate + H(+). It carries out the reaction dITP + H2O = dIMP + diphosphate + H(+). The catalysed reaction is ITP + H2O = IMP + diphosphate + H(+). In terms of biological role, pyrophosphatase that catalyzes the hydrolysis of nucleoside triphosphates to their monophosphate derivatives, with a high preference for the non-canonical purine nucleotides XTP (xanthosine triphosphate), dITP (deoxyinosine triphosphate) and ITP. Seems to function as a house-cleaning enzyme that removes non-canonical purine nucleotides from the nucleotide pool, thus preventing their incorporation into DNA/RNA and avoiding chromosomal lesions. This chain is dITP/XTP pyrophosphatase, found in Exiguobacterium sp. (strain ATCC BAA-1283 / AT1b).